A 292-amino-acid polypeptide reads, in one-letter code: 2-(5''-triphosphoribosyl)-3'-dephosphocoenzyme-A synthase (292 aa).

Belongs to the CitG/MdcB family.

It carries out the reaction 3'-dephospho-CoA + ATP = 2'-(5''-triphospho-alpha-D-ribosyl)-3'-dephospho-CoA + adenine. Its function is as follows. Catalyzes the formation of 2-(5''-triphosphoribosyl)-3'-dephosphocoenzyme-A, the precursor of the prosthetic group of the holo-acyl carrier protein (gamma chain) of citrate lyase, from ATP and dephospho-CoA. The sequence is that of 2-(5''-triphosphoribosyl)-3'-dephosphocoenzyme-A synthase from Escherichia coli O6:K15:H31 (strain 536 / UPEC).